Reading from the N-terminus, the 111-residue chain is Kalata-B7 (111 aa).

The first 28 residues, 1–28 (MAKFTNCLALCLLLAAVVGAFGVELSEA), serve as a signal peptide directing secretion. A propeptide spanning residues 29–75 (DKSAVVNEIAEKMALQEMLDGVDKLFLRKMKSSETTLTMFLKEMQLK) is cleaved from the precursor. Positions 76-104 (GLPVCGETCTLGTCYTQGCTCSWPICKRN) form a cross-link, cyclopeptide (Gly-Asn). Intrachain disulfides connect cysteine 80–cysteine 94, cysteine 84–cysteine 96, and cysteine 89–cysteine 101. Positions 105 to 111 (GLPDVAA) are excised as a propeptide.

Post-translationally, kalata-B7 is a cyclic peptide.

Functionally, probably participates in a plant defense mechanism. Has hemolytic activity. The polypeptide is Kalata-B7 (OAK3) (Oldenlandia affinis).